The sequence spans 49 residues: Large ribosomal subunit protein bL33 (49 aa).

This sequence belongs to the bacterial ribosomal protein bL33 family.

This chain is Large ribosomal subunit protein bL33, found in Syntrophotalea carbinolica (strain DSM 2380 / NBRC 103641 / GraBd1) (Pelobacter carbinolicus).